A 425-amino-acid polypeptide reads, in one-letter code: Serine--tRNA ligase (425 aa).

230–232 (TAE) is an L-serine binding site. Position 261 to 263 (261 to 263 (RSE)) interacts with ATP. An L-serine-binding site is contributed by E284. Residue 348–351 (EISS) coordinates ATP. Residue S384 participates in L-serine binding.

The protein belongs to the class-II aminoacyl-tRNA synthetase family. Type-1 seryl-tRNA synthetase subfamily. Homodimer. The tRNA molecule binds across the dimer.

The protein resides in the cytoplasm. It catalyses the reaction tRNA(Ser) + L-serine + ATP = L-seryl-tRNA(Ser) + AMP + diphosphate + H(+). It carries out the reaction tRNA(Sec) + L-serine + ATP = L-seryl-tRNA(Sec) + AMP + diphosphate + H(+). Its pathway is aminoacyl-tRNA biosynthesis; selenocysteinyl-tRNA(Sec) biosynthesis; L-seryl-tRNA(Sec) from L-serine and tRNA(Sec): step 1/1. Its function is as follows. Catalyzes the attachment of serine to tRNA(Ser). Is also able to aminoacylate tRNA(Sec) with serine, to form the misacylated tRNA L-seryl-tRNA(Sec), which will be further converted into selenocysteinyl-tRNA(Sec). This Streptococcus pyogenes serotype M6 (strain ATCC BAA-946 / MGAS10394) protein is Serine--tRNA ligase.